A 1592-amino-acid chain; its full sequence is Serine/threonine-protein kinase mrck-1 (1592 aa).

The involved in homo-dimerization stretch occupies residues 1–954 (MAEPPPDDSA…IFSPVSISAM (954 aa)). The region spanning 83–351 (FEVLKVIGKG…LSDFQLHPFF (269 aa)) is the Protein kinase domain. ATP contacts are provided by residues 89–97 (IGKGAFGEV) and lysine 112. The active-site Proton acceptor is aspartate 207. The AGC-kinase C-terminal domain occupies 352-426 (EGIDWNTIRD…THGSLLSDAR (75 aa)). Phosphoserine is present on serine 415. Tyrosine 416 carries the phosphotyrosine modification. Coiled-coil stretches lie at residues 444-782 (ELME…KNNS) and 811-871 (LDLQ…IENS). Residues 782 to 796 (SPLTTSNYIQNTPSG) are compositionally biased toward polar residues. Residues 782 to 801 (SPLTTSNYIQNTPSGWGSRR) form a disordered region. The tract at residues 955 to 1534 (ERGHNFERMK…FRTIGKDDRS (580 aa)) is involved in binding to membranes, with a preference for di-phosphorylated phosphoinositides (PIPs). The Phorbol-ester/DAG-type zinc-finger motif lies at 957 to 1007 (GHNFERMKIKTPTKCGHCTSILIGLDRQGLFCQSCQYACHVSCAERVSQSC). Positions 958, 971, 974, 988, 991, 996, 999, and 1007 each coordinate Zn(2+). The PH domain maps to 1026–1154 (GTAYEGLVKT…WVVALSELKT (129 aa)). One can recognise a CNH domain in the interval 1181–1479 (IRVAQCCAII…KPLSGDGILS (299 aa)). The CRIB domain occupies 1544–1557 (ISTPSDFMHIVHMG). The tract at residues 1544-1557 (ISTPSDFMHIVHMG) is involved in interaction with cdc-42 (GTP-bound). Deletion prevents rescue of a null mutant; furthermore deleted form of mrck-1 is no longer recruited to the cell cortex and instead appears to be completely cytoplasmic.

It belongs to the protein kinase superfamily. AGC Ser/Thr protein kinase family. DMPK subfamily. In terms of assembly, homodimer, via N-terminal domains. Interacts (via the CRIB domain) with cdc-42 (GTP-bound), but with a lower affinity for cdc-42 bound to GDP; the interaction is direct and may play a role in the recruitment of mrck-1 to the apical membrane. Mg(2+) serves as cofactor. In terms of tissue distribution, expressed in embryonic and L4 larval seam cells and in embryonic dorsal and ventral epidermal cells. Also expressed in the pharynx throughout development and in sublateral nerve cords in the L4 larva.

The protein resides in the cytoplasm. Its subcellular location is the cell cortex. The catalysed reaction is L-seryl-[protein] + ATP = O-phospho-L-seryl-[protein] + ADP + H(+). It carries out the reaction L-threonyl-[protein] + ATP = O-phospho-L-threonyl-[protein] + ADP + H(+). Its function is as follows. Serine/threonine-protein kinase. Involved in regulating endoderm precursor cell movements during early gastrulation; activates apical myosin and thereby increases actomyosin contractility and tension in the apical cell cortex, probably as a result of recruitment of mrck-1 to the cortex by a combination of interaction with active cdc-42 and membrane binding. May phosphorylate and inactivate the phosphatase mel-11, and thereby contribute to the regulation of myosin II contractility during embryonic elongation. Involved in controlling canal length and Golgi/ER integrity during excretory canal elongation. The polypeptide is Serine/threonine-protein kinase mrck-1 (Caenorhabditis elegans).